The following is a 677-amino-acid chain: MFERNQKTIFVLDHTRYFSIASEEYISMEYLKGKQTGLEAGANGGTQFSKSLWTCACESSIEYCRVVWDLFPGTKHVRFIVSDTAAHIVNTWSPSTQNMSHVMNAMVMVGVPSMPQSSDSSVIHGLRAAIEALAEPTDEQMQAMGGKQTLHIPNEGRVICITSARDNTSMKSLEDIFHTVLVQQNSLMTSPPSKKGLPIDHCHLVILNIVPLGVESLVTNRSLLEISPLLNVEIHTVPAPDISYKLTHLILDHYELASTTVTNIPMKEEQNANSSANYDVEILHSRQAHTIAGGPDFNLPTSIKTGSTYETVTLKWCTPRGCSSADLQPCLGQFRVTPVDVTSRPSSCLINFLLNGRSVLLEMPRKTGTKATSHMLSARGGEIFVHALSILRSCMDEAPAIQDGPGGRVTDYRFGELGQLIKLSRMIPLKAKDPSHPTHSTLRRRLPRYFPWTTSSSILFNLQRQINWLPHFLHLLVKEDMDKQDEVRCQQHIHELYKSASRGDMLPFTNSNGGRLKLSKAKDQYRLLYRELEQLIQLNSFTPHHKNLLESLQSLRSAYGDAPTKSESANALLRSYTESPLSPERLEPTSSSSSNSLLKARKRRMSTCGQRSLFDIISSAERSQSNKRLDFSGRLCTLPGQVAKLYPDFGNKDKDSLVIAGGVASTTASAKEESIRG.

The stretch at 515–540 forms a coiled coil; the sequence is RLKLSKAKDQYRLLYRELEQLIQLNS. A compositionally biased stretch (low complexity) spans 578-598; the sequence is ESPLSPERLEPTSSSSSNSLL. Positions 578 to 604 are disordered; the sequence is ESPLSPERLEPTSSSSSNSLLKARKRR. Positions 598-604 match the Nuclear localization signal (NLS) motif; that stretch reads LKARKRR.

Belongs to the Integrator subunit 13 family. As to quaternary structure, belongs to the multiprotein complex Integrator, at least composed of IntS1, IntS2, IntS3, IntS4, omd/IntS5, IntS6, defl/IntS7, IntS8, IntS9, IntS10, IntS11, IntS12, asun/IntS13, IntS14 and IntS15. The core complex associates with protein phosphatase 2A subunits mts/PP2A and Pp2A-29B, to form the Integrator-PP2A (INTAC) complex. Post-translationally, phosphorylated.

Its subcellular location is the nucleus. The protein localises to the cytoplasm. The protein resides in the perinuclear region. In terms of biological role, component of the integrator complex, a multiprotein complex that terminates RNA polymerase II (Pol II) transcription in the promoter-proximal region of genes. The integrator complex provides a quality checkpoint during transcription elongation by driving premature transcription termination of transcripts that are unfavorably configured for transcriptional elongation: the complex terminates transcription by (1) catalyzing dephosphorylation of the C-terminal domain (CTD) of Pol II subunit Polr2A/Rbp1 and Spt5, and (2) degrading the exiting nascent RNA transcript via endonuclease activity. The integrator complex is also involved in the 3'-end processing of the U7 snRNA, and also the spliceosomal snRNAs U1, U2, U4 and U5. The sequence is that of Protein asunder (asun) from Drosophila willistoni (Fruit fly).